The sequence spans 444 residues: Phosphoglucosamine mutase (444 aa).

Catalysis depends on Ser-102, which acts as the Phosphoserine intermediate. 4 residues coordinate Mg(2+): Ser-102, Asp-241, Asp-243, and Asp-245. A Phosphoserine modification is found at Ser-102.

This sequence belongs to the phosphohexose mutase family. Mg(2+) serves as cofactor. Post-translationally, activated by phosphorylation.

It carries out the reaction alpha-D-glucosamine 1-phosphate = D-glucosamine 6-phosphate. Functionally, catalyzes the conversion of glucosamine-6-phosphate to glucosamine-1-phosphate. In Paracidovorax citrulli (strain AAC00-1) (Acidovorax citrulli), this protein is Phosphoglucosamine mutase.